Here is a 402-residue protein sequence, read N- to C-terminus: Protein prenyltransferase alpha subunit repeat-containing protein 1 (402 aa).

Ala-2 bears the N-acetylalanine mark. PFTA repeat units follow at residues 87-120 (LIDV…LNPI), 122-155 (DLHL…QETS), 180-213 (EMEV…KLDV), and 219-252 (ELSS…SQTV). Positions 263–282 (LRSEPALVPPKDEEAAVSTE) are disordered. The PFTA 5 repeat unit spans residues 295–328 (EVEFSTDLIDSYPGHETLWCHRRHIFYLQHHLNA).

The protein belongs to the protein prenyltransferase subunit alpha family.

The protein is Protein prenyltransferase alpha subunit repeat-containing protein 1 (PTAR1) of Homo sapiens (Human).